We begin with the raw amino-acid sequence, 138 residues long: Sec-independent protein translocase protein TatB (138 aa).

The helical transmembrane segment at 1–21 (MFDIGATELLVIAIVAILVIG) threads the bilayer. Residues 74-138 (MAKHPADQMQ…EPRLPLEGRD (65 aa)) are disordered. Low complexity predominate over residues 83–97 (QPLDAPDPALSAAEA). Residues 98-138 (RAAHTEAAKPARAAEETQADRASADEHPAASEPRLPLEGRD) show a composition bias toward basic and acidic residues.

It belongs to the TatB family. As to quaternary structure, the Tat system comprises two distinct complexes: a TatABC complex, containing multiple copies of TatA, TatB and TatC subunits, and a separate TatA complex, containing only TatA subunits. Substrates initially bind to the TatABC complex, which probably triggers association of the separate TatA complex to form the active translocon.

It localises to the cell inner membrane. Its function is as follows. Part of the twin-arginine translocation (Tat) system that transports large folded proteins containing a characteristic twin-arginine motif in their signal peptide across membranes. Together with TatC, TatB is part of a receptor directly interacting with Tat signal peptides. TatB may form an oligomeric binding site that transiently accommodates folded Tat precursor proteins before their translocation. In Erythrobacter litoralis (strain HTCC2594), this protein is Sec-independent protein translocase protein TatB.